Reading from the N-terminus, the 138-residue chain is Isochorismatase-like protein asqB (138 aa).

It belongs to the isochorismatase family.

It carries out the reaction [(1'E)-5'-(3',3'-dimethyloxiran-2'-yl)-3'-hydroxy-3'-methylpent-1'-en-1'-yl]-quinolinone B = yaequinolone C. It functions in the pathway secondary metabolite biosynthesis. It participates in alkaloid biosynthesis. The protein operates within mycotoxin biosynthesis. In terms of biological role, isochorismatase-like protein; part of the gene cluster that mediates the biosynthesis of the aspoquinolone mycotoxins. Within the pathway, asqB converts [(1'E)-5'-(3',3'-dimethyloxiran-2'-yl)-3'-hydroxy-3'-methylpent-1'-en-1'-yl]-quinolinone B into yaequinolone C. The first step of the pathway is catalyzed by the nonribosomal peptide synthetase asqK that condenses anthranilic acid and O-methyl-L-tyrosine to produce 4'-methoxycyclopeptin. 4'-methoxycyclopeptin is then converted to 4'-methoxydehydrocyclopeptin by the ketoglutarate-dependent dioxygenase asqJ. AsqJ also converts its first product 4'-methoxydehydrocyclopeptin to 4'-methoxycyclopenin. The following conversion of 4'-methoxycyclopenin into 4'-methoxyviridicatin is catalyzed by the cyclopenase asqI. 4'-methoxyviridicatin is the precursor of quinolone natural products, and is further converted to quinolinone B. The prenyltransferase asqH1 then catalyzes the canonical Friedel-Crafts alkylation of quinolinone B with dimethylallyl cation to yield dimethylallyl quinolone, which is subjected to FAD-dependent dehydrogenation by the FAD-linked oxidoreductase asqF to yield conjugated aryl diene. The delta(3') double bond then serves as the site of the second alkylation with DMAPP catalyzed by the prenyltransferase asqH2 to yield a carbenium ion intermediate, which can be attacked by H(2)O to yield a styrenyl quinolone containing a C3'-hydroxyprenyl chain. The FAD-dependent monooxygenase asqG performs epoxidation of the terminal C7'-C8' olefin. Finally, after dehydratation of the epoxide at C3 by asqC, the quinolone epoxide rearrangement protein asqO catalyzes an enzymatic 3-exo-tet cyclization to yield the cyclopropyl-THF ring system in aspoquinolone. The polypeptide is Isochorismatase-like protein asqB (Emericella nidulans (strain FGSC A4 / ATCC 38163 / CBS 112.46 / NRRL 194 / M139) (Aspergillus nidulans)).